The sequence spans 1190 residues: PAN2-PAN3 deadenylation complex catalytic subunit PAN2 (1190 aa).

6 WD repeats span residues 24–63 (TTIV…NSLY), 129–166 (NKFN…PNVL), 167–207 (SSFD…TMKT), 222–264 (GNYI…AIAP), 266–306 (PFPA…NVYL), and 322–361 (NNKP…KDFV). Positions 364 to 511 (PQPVEQPDII…FQYKFQGKLN (148 aa)) are linker. In terms of domain architecture, USP spans 512–924 (KVPNCYSRLQ…KPIVIMYQQT (413 aa)). The Exonuclease domain occupies 988–1158 (VAIDAEFVML…EDANTALLLY (171 aa)). Residues Asp-991, Glu-993, Asp-1097, and Asp-1150 each coordinate a divalent metal cation.

The protein belongs to the peptidase C19 family. PAN2 subfamily. In terms of assembly, forms a heterotrimer with an asymmetric homodimer of the regulatory subunit PAN3 to form the poly(A)-nuclease (PAN) deadenylation complex. A divalent metal cation is required as a cofactor.

It is found in the cytoplasm. It catalyses the reaction Exonucleolytic cleavage of poly(A) to 5'-AMP.. Its activity is regulated as follows. Positively regulated by the regulatory subunit PAN3. Functionally, catalytic subunit of the poly(A)-nuclease (PAN) deadenylation complex, one of two cytoplasmic mRNA deadenylases involved in mRNA turnover. PAN specifically shortens poly(A) tails of RNA and the activity is stimulated by poly(A)-binding protein PAB1. PAN deadenylation is followed by rapid degradation of the shortened mRNA tails by the CCR4-NOT complex. Deadenylated mRNAs are then degraded by two alternative mechanisms, namely exosome-mediated 3'-5' exonucleolytic degradation, or deadenylation-dependent mRNA decaping and subsequent 5'-3' exonucleolytic degradation by XRN1. May also be involved in post-transcriptional maturation of mRNA poly(A) tails. This Candida albicans (strain SC5314 / ATCC MYA-2876) (Yeast) protein is PAN2-PAN3 deadenylation complex catalytic subunit PAN2.